A 290-amino-acid chain; its full sequence is Ribosomal RNA small subunit methyltransferase A (290 aa).

S-adenosyl-L-methionine is bound by residues N27, L29, G54, E75, D100, and N125.

The protein belongs to the class I-like SAM-binding methyltransferase superfamily. rRNA adenine N(6)-methyltransferase family. RsmA subfamily.

Its subcellular location is the cytoplasm. It catalyses the reaction adenosine(1518)/adenosine(1519) in 16S rRNA + 4 S-adenosyl-L-methionine = N(6)-dimethyladenosine(1518)/N(6)-dimethyladenosine(1519) in 16S rRNA + 4 S-adenosyl-L-homocysteine + 4 H(+). Its function is as follows. Specifically dimethylates two adjacent adenosines (A1518 and A1519) in the loop of a conserved hairpin near the 3'-end of 16S rRNA in the 30S particle. May play a critical role in biogenesis of 30S subunits. The sequence is that of Ribosomal RNA small subunit methyltransferase A from Streptococcus pyogenes serotype M18 (strain MGAS8232).